Here is a 148-residue protein sequence, read N- to C-terminus: Large ribosomal subunit protein bL9 (148 aa).

Belongs to the bacterial ribosomal protein bL9 family.

Its function is as follows. Binds to the 23S rRNA. The protein is Large ribosomal subunit protein bL9 of Finegoldia magna (strain ATCC 29328 / DSM 20472 / WAL 2508) (Peptostreptococcus magnus).